The following is a 175-amino-acid chain: MSILQMLYYPDQRLRKIARSVSIISHDTKKIISDMFETMYFQQGIGLAATQVDIHQKIIVIDLNNNIQKRLVFINPCIIKKIGTITHIIEGCLSIPKIRASVPRSQNIIVQSLDENGNNFEMEATDLLSVCIQHEIDHLLGKLFIDYLSPFKIQRIHKKINKWSTVYKNHIKLSH.

Fe cation contacts are provided by cysteine 92 and histidine 134. Glutamate 135 is a catalytic residue. Position 138 (histidine 138) interacts with Fe cation.

It belongs to the polypeptide deformylase family. Fe(2+) serves as cofactor.

It catalyses the reaction N-terminal N-formyl-L-methionyl-[peptide] + H2O = N-terminal L-methionyl-[peptide] + formate. Its function is as follows. Removes the formyl group from the N-terminal Met of newly synthesized proteins. Requires at least a dipeptide for an efficient rate of reaction. N-terminal L-methionine is a prerequisite for activity but the enzyme has broad specificity at other positions. This chain is Peptide deformylase, found in Blochmanniella floridana.